We begin with the raw amino-acid sequence, 195 residues long: Endoribonuclease YbeY (195 aa).

The Zn(2+) site is built by histidine 152, histidine 156, and histidine 162.

Belongs to the endoribonuclease YbeY family. The cofactor is Zn(2+).

Its subcellular location is the cytoplasm. Its function is as follows. Single strand-specific metallo-endoribonuclease involved in late-stage 70S ribosome quality control and in maturation of the 3' terminus of the 16S rRNA. In Rhodopseudomonas palustris (strain HaA2), this protein is Endoribonuclease YbeY.